Reading from the N-terminus, the 372-residue chain is Pyruvylated Gal-beta-1,3-epitope synthesis protein 5 (372 aa).

Over 1 to 12 the chain is Cytoplasmic; it reads MGLPLRIFAGNG. The helical; Signal-anchor for type II membrane protein transmembrane segment at 13-35 threads the bilayer; it reads IGGWCLRLFLFGSLILLLRPLIF. Topologically, residues 36–372 are lumenal; the sequence is YSNTTMKKLK…LRIIEQWKQL (337 aa). N-linked (GlcNAc...) asparagine glycans are attached at residues Asn-38 and Asn-128.

The protein localises to the golgi apparatus membrane. Involved in cell wall biogenesis. Has a role in the addition of Gal-beta1,3 moeities to galactomannans and their subsequent pyruvylation. Has a role in meiosis. This is Pyruvylated Gal-beta-1,3-epitope synthesis protein 5 (pvg5) from Schizosaccharomyces pombe (strain 972 / ATCC 24843) (Fission yeast).